A 210-amino-acid chain; its full sequence is Protein GrpE (210 aa).

Positions 1 to 12 (MSDQAKDERAPS) are enriched in basic and acidic residues. Disordered stretches follow at residues 1–26 (MSDQ…RTEG) and 191–210 (IAAE…EKDA).

This sequence belongs to the GrpE family. As to quaternary structure, homodimer.

Its subcellular location is the cytoplasm. Its function is as follows. Participates actively in the response to hyperosmotic and heat shock by preventing the aggregation of stress-denatured proteins, in association with DnaK and GrpE. It is the nucleotide exchange factor for DnaK and may function as a thermosensor. Unfolded proteins bind initially to DnaJ; upon interaction with the DnaJ-bound protein, DnaK hydrolyzes its bound ATP, resulting in the formation of a stable complex. GrpE releases ADP from DnaK; ATP binding to DnaK triggers the release of the substrate protein, thus completing the reaction cycle. Several rounds of ATP-dependent interactions between DnaJ, DnaK and GrpE are required for fully efficient folding. In Mesorhizobium japonicum (strain LMG 29417 / CECT 9101 / MAFF 303099) (Mesorhizobium loti (strain MAFF 303099)), this protein is Protein GrpE.